The following is an 860-amino-acid chain: Alanine--tRNA ligase (860 aa).

Zn(2+)-binding residues include histidine 563, histidine 567, cysteine 665, and histidine 669.

The protein belongs to the class-II aminoacyl-tRNA synthetase family. Requires Zn(2+) as cofactor.

It localises to the cytoplasm. It carries out the reaction tRNA(Ala) + L-alanine + ATP = L-alanyl-tRNA(Ala) + AMP + diphosphate. Its function is as follows. Catalyzes the attachment of alanine to tRNA(Ala) in a two-step reaction: alanine is first activated by ATP to form Ala-AMP and then transferred to the acceptor end of tRNA(Ala). Also edits incorrectly charged Ser-tRNA(Ala) and Gly-tRNA(Ala) via its editing domain. The polypeptide is Alanine--tRNA ligase (Vibrio parahaemolyticus serotype O3:K6 (strain RIMD 2210633)).